Reading from the N-terminus, the 1282-residue chain is Ribosome biogenesis protein BMS1 homolog (1282 aa).

Positions 1–24 (MEAKDQKKHRKKNSGPKAAKKKKR) are enriched in basic residues. The tract at residues 1-43 (MEAKDQKKHRKKNSGPKAAKKKKRLLQDLQLGDEEDARKRNPK) is disordered. A Glycyl lysine isopeptide (Lys-Gly) (interchain with G-Cter in SUMO2) cross-link involves residue Lys43. The region spanning 80 to 245 (PPPIVVVVMG…GRFITVMKFR (166 aa)) is the Bms1-type G domain. Residues 89–96 (GPPKVGKS) are G1. 89–96 (GPPKVGKS) contributes to the ATP binding site. Residues 117 to 121 (PVTIV) are G2. The G3 stretch occupies residues 132 to 135 (ECGC). The tract at residues 184 to 187 (THLD) is G4. Residue Ser188 is modified to Phosphoserine. Positions 219-228 (LSGMVHGEYQ) are G5. 2 disordered regions span residues 397 to 557 (DSKP…ANCQ) and 575 to 667 (PTFD…ALKW). Residues Lys399 and Lys415 each participate in a glycyl lysine isopeptide (Lys-Gly) (interchain with G-Cter in SUMO2) cross-link. Acidic residues-rich tracts occupy residues 434-472 (GDED…ENAE) and 503-531 (DSDD…EDCT). Low complexity predominate over residues 535 to 550 (KGISGSKAAGEGSKAG). At Ser552 the chain carries Phosphoserine. Residues 588-610 (FASEDESEESSSLSAEEEDSENE) are compositionally biased toward acidic residues. Ser625 and Ser639 each carry phosphoserine. Lys646 is covalently cross-linked (Glycyl lysine isopeptide (Lys-Gly) (interchain with G-Cter in SUMO2)). A compositionally biased stretch (basic and acidic residues) spans 653 to 667 (EENNDSKETSGALKW). At Thr708 the chain carries Phosphothreonine. Disordered stretches follow at residues 787 to 822 (ETGD…ESAK) and 1178 to 1202 (NKPK…IREP). Lys810 is covalently cross-linked (Glycyl lysine isopeptide (Lys-Gly) (interchain with G-Cter in SUMO1); alternate). Lys810 is covalently cross-linked (Glycyl lysine isopeptide (Lys-Gly) (interchain with G-Cter in SUMO2); alternate). Lys1206 participates in a covalent cross-link: Glycyl lysine isopeptide (Lys-Gly) (interchain with G-Cter in SUMO2). The segment at 1219–1282 (SQKMKKAKEQ…SLKGAEGQLQ (64 aa)) is disordered. Basic and acidic residues predominate over residues 1228 to 1248 (QRHLHNKEHFRAKQKEEEEKL). A compositionally biased stretch (basic residues) spans 1249–1259 (KRQKDLRKKLF).

The protein belongs to the TRAFAC class translation factor GTPase superfamily. Bms1-like GTPase family. BMS1 subfamily. As to quaternary structure, part of the small subunit (SSU) processome, composed of more than 70 proteins and the RNA chaperone small nucleolar RNA (snoRNA) U3. Interacts with RCL1.

It is found in the nucleus. Its subcellular location is the nucleolus. The catalysed reaction is GTP + H2O = GDP + phosphate + H(+). Its function is as follows. GTPase required for the synthesis of 40S ribosomal subunits and for processing of pre-ribosomal RNA (pre-rRNA) at sites A0, A1, and A2. Controls access of pre-rRNA intermediates to RCL1 during ribosome biogenesis by binding RCL1 in a GTP-dependent manner, and delivering it to pre-ribosomes. GTP-binding and/or GTP hydrolysis may induce conformational rearrangements within the BMS1-RCL1 complex allowing the interaction of RCL1 with its RNA substrate. Required for RCL1 import into the nucleus. This chain is Ribosome biogenesis protein BMS1 homolog, found in Homo sapiens (Human).